The chain runs to 278 residues: Proline-rich 28 kDa antigen homolog (278 aa).

The first 28 residues, methionine 1–glycine 28, serve as a signal peptide directing secretion.

The protein to M.tuberculosis Rv0040c.

The polypeptide is Proline-rich 28 kDa antigen homolog (Mycobacterium leprae (strain TN)).